We begin with the raw amino-acid sequence, 578 residues long: Protein SIA1 (578 aa).

An N-terminal signal peptide occupies residues 1–28 (MFRNRRILLYARRFFLVWICFLFITSWS).

Functionally, may be involved in the activation of the plasma membrane proton-ATPase by glucose. In Kluyveromyces lactis (strain ATCC 8585 / CBS 2359 / DSM 70799 / NBRC 1267 / NRRL Y-1140 / WM37) (Yeast), this protein is Protein SIA1 (SIA1).